Here is a 169-residue protein sequence, read N- to C-terminus: Crossover junction endodeoxyribonuclease RuvC (169 aa).

Residues Asp-11, Glu-71, and Asp-143 contribute to the active site. Mg(2+) contacts are provided by Asp-11, Glu-71, and Asp-143.

The protein belongs to the RuvC family. As to quaternary structure, homodimer which binds Holliday junction (HJ) DNA. The HJ becomes 2-fold symmetrical on binding to RuvC with unstacked arms; it has a different conformation from HJ DNA in complex with RuvA. In the full resolvosome a probable DNA-RuvA(4)-RuvB(12)-RuvC(2) complex forms which resolves the HJ. Requires Mg(2+) as cofactor.

The protein resides in the cytoplasm. The catalysed reaction is Endonucleolytic cleavage at a junction such as a reciprocal single-stranded crossover between two homologous DNA duplexes (Holliday junction).. In terms of biological role, the RuvA-RuvB-RuvC complex processes Holliday junction (HJ) DNA during genetic recombination and DNA repair. Endonuclease that resolves HJ intermediates. Cleaves cruciform DNA by making single-stranded nicks across the HJ at symmetrical positions within the homologous arms, yielding a 5'-phosphate and a 3'-hydroxyl group; requires a central core of homology in the junction. The consensus cleavage sequence is 5'-(A/T)TT(C/G)-3'. Cleavage occurs on the 3'-side of the TT dinucleotide at the point of strand exchange. HJ branch migration catalyzed by RuvA-RuvB allows RuvC to scan DNA until it finds its consensus sequence, where it cleaves and resolves the cruciform DNA. This Rhizobium etli (strain CIAT 652) protein is Crossover junction endodeoxyribonuclease RuvC.